A 396-amino-acid polypeptide reads, in one-letter code: 1-deoxy-D-xylulose 5-phosphate reductoisomerase (396 aa).

Residues Thr-10, Gly-11, Ser-12, Ile-13, and Asn-123 each contribute to the NADPH site. A 1-deoxy-D-xylulose 5-phosphate-binding site is contributed by Lys-124. Glu-125 is a binding site for NADPH. Asp-149 is a binding site for Mn(2+). Positions 150, 151, 185, and 208 each coordinate 1-deoxy-D-xylulose 5-phosphate. Residue Glu-151 participates in Mn(2+) binding. Gly-214 lines the NADPH pocket. Residues Ser-221, Asn-226, Lys-227, and Glu-230 each contribute to the 1-deoxy-D-xylulose 5-phosphate site. Glu-230 provides a ligand contact to Mn(2+).

This sequence belongs to the DXR family. The cofactor is Mg(2+). Mn(2+) serves as cofactor.

It catalyses the reaction 2-C-methyl-D-erythritol 4-phosphate + NADP(+) = 1-deoxy-D-xylulose 5-phosphate + NADPH + H(+). It participates in isoprenoid biosynthesis; isopentenyl diphosphate biosynthesis via DXP pathway; isopentenyl diphosphate from 1-deoxy-D-xylulose 5-phosphate: step 1/6. In terms of biological role, catalyzes the NADPH-dependent rearrangement and reduction of 1-deoxy-D-xylulose-5-phosphate (DXP) to 2-C-methyl-D-erythritol 4-phosphate (MEP). In Shewanella baltica (strain OS223), this protein is 1-deoxy-D-xylulose 5-phosphate reductoisomerase.